The chain runs to 400 residues: Nicotinate phosphoribosyltransferase (400 aa).

Phosphohistidine; by autocatalysis is present on H220.

This sequence belongs to the NAPRTase family. In terms of processing, transiently phosphorylated on a His residue during the reaction cycle. Phosphorylation strongly increases the affinity for substrates and increases the rate of nicotinate D-ribonucleotide production. Dephosphorylation regenerates the low-affinity form of the enzyme, leading to product release.

It catalyses the reaction nicotinate + 5-phospho-alpha-D-ribose 1-diphosphate + ATP + H2O = nicotinate beta-D-ribonucleotide + ADP + phosphate + diphosphate. It functions in the pathway cofactor biosynthesis; NAD(+) biosynthesis; nicotinate D-ribonucleotide from nicotinate: step 1/1. Its function is as follows. Catalyzes the synthesis of beta-nicotinate D-ribonucleotide from nicotinate and 5-phospho-D-ribose 1-phosphate at the expense of ATP. The polypeptide is Nicotinate phosphoribosyltransferase (Shigella sonnei (strain Ss046)).